Consider the following 93-residue polypeptide: uncharacterized protein (93 aa).

3 consecutive transmembrane segments (helical) span residues 15–35, 48–68, and 72–92; these read MAGL…VMLV, ILAI…IYQI, and LSYA…AGVH.

It is found in the cell membrane. This is an uncharacterized protein from Bacillus subtilis (strain 168).